We begin with the raw amino-acid sequence, 351 residues long: L-threonine 3-dehydrogenase (351 aa).

Cys39 is a Zn(2+) binding site. Catalysis depends on charge relay system residues Thr41 and His44. Zn(2+)-binding residues include His64, Glu65, Cys94, Cys97, Cys100, and Cys108. NAD(+) is bound by residues Ile176, Asp196, Arg201, 271 to 273 (LGI), and 295 to 296 (IY).

The protein belongs to the zinc-containing alcohol dehydrogenase family. Homotetramer. It depends on Zn(2+) as a cofactor.

It localises to the cytoplasm. It catalyses the reaction L-threonine + NAD(+) = (2S)-2-amino-3-oxobutanoate + NADH + H(+). Its pathway is amino-acid degradation; L-threonine degradation via oxydo-reductase pathway; glycine from L-threonine: step 1/2. Its function is as follows. Catalyzes the NAD(+)-dependent oxidation of L-threonine to 2-amino-3-ketobutyrate. The polypeptide is L-threonine 3-dehydrogenase (Francisella tularensis subsp. holarctica (strain OSU18)).